A 307-amino-acid polypeptide reads, in one-letter code: MLINKNLKIGIVVEYNPFHNGHIYQLNWIKNNYPNSKIIIVMSHKYSQRGEIICMPFWKRKLWAKKYDVSKVLKLSTRKTIQAAHIFAQNAIQKLNKEKIDILVFGSESTNDSLMLKIATFIKENKEIYNQTLKKNLKGGNSFPKANFLTLKELTNEDFSLPNDILGFEYIKQIVENNYKIQPIAIKRSVGFHSEEPSDEFASASLIRKMLKDGRDVSKYTPVDLKQIPTKLLIENTFLKFKKYILKTPASKLKKYLLVDEGIENLFKKNILLFDNYHDFIDACVSRRYTRSKIMRTYLCILLKIKK.

ATP contacts are provided by residues 12–25 (VVEY…HIYQ), Gly106, Asn163, and Arg188.

Belongs to the TmcAL family.

The protein localises to the cytoplasm. It catalyses the reaction cytidine(34) in elongator tRNA(Met) + acetate + ATP = N(4)-acetylcytidine(34) in elongator tRNA(Met) + AMP + diphosphate. Catalyzes the formation of N(4)-acetylcytidine (ac(4)C) at the wobble position of elongator tRNA(Met), using acetate and ATP as substrates. First activates an acetate ion to form acetyladenylate (Ac-AMP) and then transfers the acetyl group to tRNA to form ac(4)C34. This Mycoplasmopsis synoviae (strain 53) (Mycoplasma synoviae) protein is tRNA(Met) cytidine acetate ligase.